The following is a 284-amino-acid chain: Shikimate dehydrogenase (NADP(+)) (284 aa).

Residues 20–22 (SIS) and S67 contribute to the shikimate site. The active-site Proton acceptor is the K71. An NADP(+)-binding site is contributed by D83. Residues N92 and D107 each contribute to the shikimate site. NADP(+)-binding positions include 129–133 (GAGGA) and I227. Y229 contacts shikimate. An NADP(+)-binding site is contributed by G250.

The protein belongs to the shikimate dehydrogenase family. Homodimer.

The catalysed reaction is shikimate + NADP(+) = 3-dehydroshikimate + NADPH + H(+). The protein operates within metabolic intermediate biosynthesis; chorismate biosynthesis; chorismate from D-erythrose 4-phosphate and phosphoenolpyruvate: step 4/7. Its function is as follows. Involved in the biosynthesis of the chorismate, which leads to the biosynthesis of aromatic amino acids. Catalyzes the reversible NADPH linked reduction of 3-dehydroshikimate (DHSA) to yield shikimate (SA). The chain is Shikimate dehydrogenase (NADP(+)) from Streptococcus pneumoniae (strain Taiwan19F-14).